The chain runs to 445 residues: Damage suppressor protein (445 aa).

Polar residues-rich tracts occupy residues M1–G15 and S25–S47. Disordered regions lie at residues M1–I145 and Y203–K445. The span at S61–Q73 shows a compositional bias: low complexity. Residues K74 to S87 are compositionally biased toward polar residues. The segment covering D88–A97 has biased composition (basic and acidic residues). The span at D117–S138 shows a compositional bias: low complexity. Residues V207–K228 show a composition bias toward basic and acidic residues. Residues G208–K445 are required and sufficient for DNA-binding and co-localization with nuclear DNA. Residues E245–N256 show a composition bias toward polar residues. Over residues E257–G306 the composition is skewed to low complexity. Residues G329–G338 are compositionally biased toward gly residues. Positions E360–K445 are required for nucleosome binding and for the protection of chromatin from hydroxyl radical-mediated DNA damage. The span at R367 to G431 shows a compositional bias: low complexity. The span at A432 to K445 shows a compositional bias: basic residues.

The protein resides in the nucleus. Unique chromatin-associating protein that contributes to the organism's exceptional tolerance to harsh environmental stresses. Binds with a higher affinity to nucleosomes than to free DNA. Protects chromatin from damage caused by hydroxyl radical-mediated cleavage induced by X-rays or treatment with hydrogen peroxide. Suppresses X-ray-induced DNA damage that includes single-strand breaks (SSBs) as well as more hazardous double-strand breaks (DSBs), and improves radiotolerance. Also shields DNA against reactive oxygen species (ROS). In Ramazzottius varieornatus (Water bear), this protein is Damage suppressor protein.